Reading from the N-terminus, the 100-residue chain is RING finger protein Z (100 aa).

Gly-2 carries the N-myristoyl glycine; by host lipid modification. The segment at 43-79 adopts an RING-type; atypical zinc-finger fold; that stretch reads CRCCWFANTNLIKCSDHYICLKCLNIMLGKSSFCDIC. The PTAP/PSAP motif signature appears at 93-96; that stretch reads PSAP.

The protein belongs to the arenaviridae Z protein family. As to quaternary structure, interacts with protein NP; this interaction probably directs the encapsidated genome to budding sites. Interacts (via RING domain) with polymerase L; this interaction inhibits viral transcription and replication, Z partially blocks the product exit tunnel for the releasing nascent RNA product. Interacts with the glycoprotein complex; this interaction plays a role in virion budding. Interacts with host eIF4E; this interaction results in eIF4E reduced affinity for its substrate, the 5'-m7 G cap structure. Interacts (via late-budding domain) with host TSG101; this interaction is essential for budding and release of viral particles. Interacts with host RPLP0; this interaction may serve to load ribosome-like particles inside the virion. Interacts with host PML; this interaction induces PML bodies redistribution in the cytoplasm upon viral infection. In terms of processing, myristoylation is required for the role of RING finger protein Z in assembly and budding.

The protein resides in the virion. It is found in the host cytoplasm. Its subcellular location is the host perinuclear region. The protein localises to the host cell membrane. In terms of biological role, plays a crucial role in virion assembly and budding. Expressed late in the virus life cycle, it acts as an inhibitor of viral transcription and RNA synthesis by interacting with the viral polymerase L. Presumably recruits the NP encapsidated genome to cellular membranes at budding sites via direct interaction with NP. Plays critical roles in the final steps of viral release by interacting with host TSG101, a member of the vacuolar protein-sorting pathway and using other cellular host proteins involved in vesicle formation pathway. The budding of the virus progeny occurs after association of protein Z with the viral glycoprotein complex SSP-GP1-GP2 at the cell periphery, step that requires myristoylation of protein Z. Also selectively represses protein production by associating with host eIF4E. In cell-based minigenome assay, has an inhibitory effect on the ribonucleoprotein machinery (vRNP), which is responsible for the replication and transcription of the viral genome. The protein is RING finger protein Z of Homo sapiens (Human).